The primary structure comprises 37 residues: Large ribosomal subunit protein bL36 (37 aa).

It belongs to the bacterial ribosomal protein bL36 family.

In Dechloromonas aromatica (strain RCB), this protein is Large ribosomal subunit protein bL36.